The following is a 94-amino-acid chain: MLQPIGDRVIVKVKEEEEKTVGGIVLASNAKQKPTEGEVVAVGEGAYTSNGDKLPMVVKKGDVVLYDKYSGTNVEYEGEKYLVLHEKDILAIEK.

The protein belongs to the GroES chaperonin family. As to quaternary structure, heptamer of 7 subunits arranged in a ring. Interacts with the chaperonin GroEL.

It is found in the cytoplasm. Functionally, together with the chaperonin GroEL, plays an essential role in assisting protein folding. The GroEL-GroES system forms a nano-cage that allows encapsulation of the non-native substrate proteins and provides a physical environment optimized to promote and accelerate protein folding. GroES binds to the apical surface of the GroEL ring, thereby capping the opening of the GroEL channel. This Lactobacillus acidophilus (strain ATCC 700396 / NCK56 / N2 / NCFM) protein is Co-chaperonin GroES.